A 103-amino-acid polypeptide reads, in one-letter code: NADH-quinone oxidoreductase subunit K (103 aa).

Helical transmembrane passes span 4–24 (LTSY…GVIA), 28–48 (IFVI…FLIT), and 64–84 (MVIS…ILLF).

It belongs to the complex I subunit 4L family. As to quaternary structure, NDH-1 is composed of 14 different subunits. Subunits NuoA, H, J, K, L, M, N constitute the membrane sector of the complex.

It localises to the cell inner membrane. It carries out the reaction a quinone + NADH + 5 H(+)(in) = a quinol + NAD(+) + 4 H(+)(out). Functionally, NDH-1 shuttles electrons from NADH, via FMN and iron-sulfur (Fe-S) centers, to quinones in the respiratory chain. The immediate electron acceptor for the enzyme in this species is believed to be ubiquinone. Couples the redox reaction to proton translocation (for every two electrons transferred, four hydrogen ions are translocated across the cytoplasmic membrane), and thus conserves the redox energy in a proton gradient. This Aliarcobacter butzleri (strain RM4018) (Arcobacter butzleri) protein is NADH-quinone oxidoreductase subunit K.